The sequence spans 98 residues: Large ribosomal subunit protein bL27 (98 aa).

Residues 1 to 10 constitute a propeptide that is removed on maturation; sequence MELKMNLQLF. The segment at 11–30 is disordered; the sequence is AQKKGTGSSKNGRDSISKRL.

This sequence belongs to the bacterial ribosomal protein bL27 family. Post-translationally, the N-terminus is cleaved by ribosomal processing cysteine protease Prp.

The sequence is that of Large ribosomal subunit protein bL27 from Natranaerobius thermophilus (strain ATCC BAA-1301 / DSM 18059 / JW/NM-WN-LF).